A 430-amino-acid polypeptide reads, in one-letter code: Glutamate-1-semialdehyde 2,1-aminomutase (430 aa).

An N6-(pyridoxal phosphate)lysine modification is found at K267.

The protein belongs to the class-III pyridoxal-phosphate-dependent aminotransferase family. HemL subfamily. Homodimer. Pyridoxal 5'-phosphate is required as a cofactor.

Its subcellular location is the cytoplasm. It carries out the reaction (S)-4-amino-5-oxopentanoate = 5-aminolevulinate. It functions in the pathway porphyrin-containing compound metabolism; protoporphyrin-IX biosynthesis; 5-aminolevulinate from L-glutamyl-tRNA(Glu): step 2/2. This Desulfotalea psychrophila (strain LSv54 / DSM 12343) protein is Glutamate-1-semialdehyde 2,1-aminomutase.